We begin with the raw amino-acid sequence, 1188 residues long: MEPNSLQWVGSPCGLHGPYIFYKAFQFHLEGKPRILSLGDFFFVRCTPKDPICIAELQLLWEERTSRQLLSSSKLYFLPEDTPQGRNSDHGEDEVIAVSEKVIVKLEDLVKWVHSDFSKWRCGFHAGPVKTEALGRNGQKEALLKYRQSTLNSGLNFKDVLKEKADLGEDEEETNVIVLSYPQYCRYRSMLKRIQDKPSSILTDQFALALGGIAVVSRNPQILYCRDTFDHPTLIENESICDEFAPNLKGRPRKKKPCPQRRDSFSGVKDSNNNSDGKAVAKVKCEARSALTKPKNNHNCKKVSNEEKPKVAIGEECRADEQAFLVALYKYMKERKTPIERIPYLGFKQINLWTMFQAAQKLGGYETITARRQWKHIYDELGGNPGSTSAATCTRRHYERLILPYERFIKGEEDKPLPPIKPRKQENSSQENENKTKVSGTKRIKHEIPKSKKEKENAPKPQDAAEVSSEQEKEQETLISQKSIPEPLPAADMKKKIEGYQEFSAKPLASRVDPEKDNETDQGSNSEKVAEEAGEKGPTPPLPSAPLAPEKDSALVPGASKQPLTSPSALVDSKQESKLCCFTESPESEPQEASFPSFPTTQPPLANQNETEDDKLPAMADYIANCTVKVDQLGSDDIHNALKQTPKVLVVQSFDMFKDKDLTGPMNENHGLNYTPLLYSRGNPGIMSPLAKKKLLSQVSGASLSSSYPYGSPPPLISKKKLIARDDLCSSLSQTHHGQSTDHMAVSRPSVIQHVQSFRSKPSEERKTINDIFKHEKLSRSDPHRCSFSKHHLNPLADSYVLKQEIQEGKDKLLEKRALPHSHMPSFLADFYSSPHLHSLYRHTEHHLHNEQTSKYPSRDMYRESENSSFPSHRHQEKLHVNYLTSLHLQDKKSAAAEAPTDDQPTDLSLPKNPHKPTGKVLGLAHSTTGPQESKGISQFQVLGSQSRDCHPKACRVSPMTMSGPKKYPESLSRSGKPHHVRLENFRKMEGMVHPILHRKMSPQNIGAARPIKRSLEDLDLVIAGKKARAVSPLDPSKEVSGKEKASEQESEGSKAAHGGHSGGGSEGHKLPLSSPIFPGLYSGSLCNSGLNSRLPAGYSHSLQYLKNQTVLSPLMQPLAFHSLVMQRGIFTSPTNSQQLYRHLAAATPVGSSYGDLLHNSIYPLAAINPQAAFPSSQLSSVHPSTKL.

Residue lysine 130 forms a Glycyl lysine isopeptide (Lys-Gly) (interchain with G-Cter in SUMO2) linkage. Residues 251 to 277 (RPRKKKPCPQRRDSFSGVKDSNNNSDG) form a disordered region. Serine 264 is modified (phosphoserine). Residues 318–410 (RADEQAFLVA…LILPYERFIK (93 aa)) enclose the ARID domain. Lysine 336 is subject to N6,N6-dimethyllysine. Residues 412–611 (EEDKPLPPIK…QPPLANQNET (200 aa)) are disordered. Lysine 445 is covalently cross-linked (Glycyl lysine isopeptide (Lys-Gly) (interchain with G-Cter in SUMO2)). Residues 446 to 458 (HEIPKSKKEKENA) show a composition bias toward basic and acidic residues. Residues lysine 494 and lysine 496 each participate in a glycyl lysine isopeptide (Lys-Gly) (interchain with G-Cter in SUMO2) cross-link. Residues 597-609 (SFPTTQPPLANQN) show a composition bias toward polar residues. Glycyl lysine isopeptide (Lys-Gly) (interchain with G-Cter in SUMO2) cross-links involve residues lysine 767, lysine 774, lysine 803, and lysine 810. Disordered regions lie at residues 846–874 (HHLH…PSHR) and 891–918 (DKKS…HKPT). A compositionally biased stretch (basic and acidic residues) spans 847–866 (HLHNEQTSKYPSRDMYRESE). Glycyl lysine isopeptide (Lys-Gly) (interchain with G-Cter in SUMO2) cross-links involve residues lysine 893, lysine 916, lysine 920, and lysine 935. The tract at residues 956–978 (RVSPMTMSGPKKYPESLSRSGKP) is disordered. Glycyl lysine isopeptide (Lys-Gly) (interchain with G-Cter in SUMO2) cross-links involve residues lysine 988, lysine 1000, and lysine 1013. The interval 1028–1070 (ARAVSPLDPSKEVSGKEKASEQESEGSKAAHGGHSGGGSEGHK) is disordered. The residue at position 1032 (serine 1032) is a Phosphoserine. Over residues 1036 to 1055 (PSKEVSGKEKASEQESEGSK) the composition is skewed to basic and acidic residues. Glycyl lysine isopeptide (Lys-Gly) (interchain with G-Cter in SUMO2) cross-links involve residues lysine 1055 and lysine 1070. At serine 1133 the chain carries Phosphoserine.

Belongs to the ARID5B family. In terms of processing, methylation at Lys-336 prevents DNA-binding. Demethylation by PHF2 promotes recruitment of the PHF2-ARID5B complex to promoters. As to expression, widely expressed, including in liver (at protein level).

Its subcellular location is the nucleus. Transcription coactivator that binds to the 5'-AATA[CT]-3' core sequence and plays a key role in adipogenesis and liver development. Acts by forming a complex with phosphorylated PHF2, which mediates demethylation at Lys-336, leading to target the PHF2-ARID5B complex to target promoters, where PHF2 mediates demethylation of dimethylated 'Lys-9' of histone H3 (H3K9me2), followed by transcription activation of target genes. The PHF2-ARID5B complex acts as a coactivator of HNF4A in liver. Required for adipogenesis: regulates triglyceride metabolism in adipocytes by regulating expression of adipogenic genes. Overexpression leads to induction of smooth muscle marker genes, suggesting that it may also act as a regulator of smooth muscle cell differentiation and proliferation. Represses the cytomegalovirus enhancer. The polypeptide is AT-rich interactive domain-containing protein 5B (ARID5B) (Homo sapiens (Human)).